The sequence spans 480 residues: Cysteine--tRNA ligase (480 aa).

Cys31 is a binding site for Zn(2+). A 'HIGH' region motif is present at residues Pro33–His43. Zn(2+)-binding residues include Cys211, His236, and Glu240. The short motif at Lys269–Ser273 is the 'KMSKS' region element. Lys272 contacts ATP.

The protein belongs to the class-I aminoacyl-tRNA synthetase family. Zn(2+) serves as cofactor.

It catalyses the reaction tRNA(Cys) + L-cysteine + ATP = L-cysteinyl-tRNA(Cys) + AMP + diphosphate. The protein is Cysteine--tRNA ligase of Encephalitozoon cuniculi (strain GB-M1) (Microsporidian parasite).